Reading from the N-terminus, the 248-residue chain is Probable phosphatase VS_II0429 (248 aa).

Zn(2+) contacts are provided by histidine 8, histidine 10, histidine 16, histidine 41, glutamate 74, histidine 102, histidine 132, aspartate 194, and histidine 196.

It belongs to the PHP family. Zn(2+) is required as a cofactor.

The polypeptide is Probable phosphatase VS_II0429 (Vibrio atlanticus (strain LGP32) (Vibrio splendidus (strain Mel32))).